A 194-amino-acid polypeptide reads, in one-letter code: Holliday junction branch migration complex subunit RuvA (194 aa).

The segment at 1–64 is domain I; it reads MIGRLRGILA…EDSVSLYGFL (64 aa). The tract at residues 65 to 140 is domain II; that stretch reads REGERRLFRD…RAADFSSGAP (76 aa). The interval 140-144 is flexible linker; sequence PITGQ. Residues 145–194 are domain III; it reads LGPDAVSEATVALQQLGYKPAEAARMAREAGAEGDEVATVIRKALQAALR.

Belongs to the RuvA family. Homotetramer. Forms an RuvA(8)-RuvB(12)-Holliday junction (HJ) complex. HJ DNA is sandwiched between 2 RuvA tetramers; dsDNA enters through RuvA and exits via RuvB. An RuvB hexamer assembles on each DNA strand where it exits the tetramer. Each RuvB hexamer is contacted by two RuvA subunits (via domain III) on 2 adjacent RuvB subunits; this complex drives branch migration. In the full resolvosome a probable DNA-RuvA(4)-RuvB(12)-RuvC(2) complex forms which resolves the HJ.

Its subcellular location is the cytoplasm. The RuvA-RuvB-RuvC complex processes Holliday junction (HJ) DNA during genetic recombination and DNA repair, while the RuvA-RuvB complex plays an important role in the rescue of blocked DNA replication forks via replication fork reversal (RFR). RuvA specifically binds to HJ cruciform DNA, conferring on it an open structure. The RuvB hexamer acts as an ATP-dependent pump, pulling dsDNA into and through the RuvAB complex. HJ branch migration allows RuvC to scan DNA until it finds its consensus sequence, where it cleaves and resolves the cruciform DNA. This is Holliday junction branch migration complex subunit RuvA from Xanthomonas campestris pv. campestris (strain 8004).